A 112-amino-acid polypeptide reads, in one-letter code: Putative pterin-4-alpha-carbinolamine dehydratase (112 aa).

The protein belongs to the pterin-4-alpha-carbinolamine dehydratase family.

The catalysed reaction is (4aS,6R)-4a-hydroxy-L-erythro-5,6,7,8-tetrahydrobiopterin = (6R)-L-erythro-6,7-dihydrobiopterin + H2O. This is Putative pterin-4-alpha-carbinolamine dehydratase from Shewanella sp. (strain ANA-3).